Here is a 454-residue protein sequence, read N- to C-terminus: MEGGLRSPLNRAVRMAKYLLDSCIGMLPYPKQRCESFNVVDLLSTCSFYKAVSLKNLKLHIEQHPSFANPSLSHISKFAFTELPFHAFTFSIPKMSLDKQESPIPIVSNDKNIGIFESQNSSPNLSSHESTLDGNNMHTVSSEGSGAYAEHGPGIDHKIPQELEIQSKPDLLWSRVRHTMREPFSEFFGVFILILFGDGVVAQVVLSSGERGSYQSISWGWGIGVMLGVYASGVSGAHINPAVTFANCIFRKFPWRKFPIYMLAQVLGAMCASGVVYANYKSAIDMFEGGNNIRTVGLNTSSAGIFCTYPAPFMTKTGQFFSEFVASTILMFCIYALQDNGNLGSGNLTPLGLFFVIFGIGACFGWETGYAINLARDFGPRLMSYFLGYGHEVWSAGNYYFWVPMVAPFIGCLFGGWLYDVFIFTGESPINTPWMGLKRLMPGGLGSKKVDSKV.

The Cytoplasmic segment spans residues 1-186 (MEGGLRSPLN…RHTMREPFSE (186 aa)). Residues 187-207 (FFGVFILILFGDGVVAQVVLS) traverse the membrane as a helical segment. Over 208 to 216 (SGERGSYQS) the chain is Extracellular. Residues 217-237 (ISWGWGIGVMLGVYASGVSGA) form a helical membrane-spanning segment. The Cytoplasmic portion of the chain corresponds to 238–257 (HINPAVTFANCIFRKFPWRK). An NPA 1 motif is present at residues 240–242 (NPA). A helical transmembrane segment spans residues 258–278 (FPIYMLAQVLGAMCASGVVYA). Topologically, residues 279–316 (NYKSAIDMFEGGNNIRTVGLNTSSAGIFCTYPAPFMTK) are extracellular. Asparagine 299 carries an N-linked (GlcNAc...) asparagine glycan. Residues 317–337 (TGQFFSEFVASTILMFCIYAL) form a helical membrane-spanning segment. Topologically, residues 338–351 (QDNGNLGSGNLTPL) are cytoplasmic. Residues 352 to 372 (GLFFVIFGIGACFGWETGYAI) form a helical membrane-spanning segment. The short motif at 373–375 (NLA) is the NPA 2 element. Topologically, residues 373-403 (NLARDFGPRLMSYFLGYGHEVWSAGNYYFWV) are extracellular. Residues 404–424 (PMVAPFIGCLFGGWLYDVFIF) traverse the membrane as a helical segment. The Cytoplasmic portion of the chain corresponds to 425–454 (TGESPINTPWMGLKRLMPGGLGSKKVDSKV).

It belongs to the MIP/aquaporin (TC 1.A.8) family.

The protein resides in the membrane. The enzyme catalyses H2O(in) = H2O(out). It carries out the reaction glycerol(in) = glycerol(out). In terms of biological role, water channel required to facilitate the transport of water across membranes. May play a role in the vegetative growth and pathogenicity. This chain is Aquaglyceroporin-9, found in Botryotinia fuckeliana (strain B05.10) (Noble rot fungus).